Consider the following 147-residue polypeptide: Hemoglobin subunit epsilon (147 aa).

The region spanning 3–147 is the Globin domain; the sequence is HWSAEEKQLI…VAHALPRKYH (145 aa). Heme b is bound by residues His64 and His93.

This sequence belongs to the globin family. As to quaternary structure, heterotetramer of two epsilon chains and two alpha chains. In terms of tissue distribution, red blood cells.

Functionally, beta-type chain found in early embryos. This Cairina moschata (Muscovy duck) protein is Hemoglobin subunit epsilon (HBE).